Here is a 283-residue protein sequence, read N- to C-terminus: MAISAAQVKELRERTGAGMMDCKKALEETNGDMELAIDNMRKSGAAKAAKKAGNIAADGTILIKNGEGFAVLLEVNCQTDFVAKDANFLGFANAVLDVAAASKVSLEDLKAQFEEARVALVAKIGENINVRRVEYIDGTQLASYRHGERIGVVVTGEADEETLKHLAMHVAASKPEYVNPEDVPADVVAREQALQIEISMNEGKPAEIAEKMVVGRMKKFTGEISLTGQAYIMEPKKTVGEFLKEKGAKVTNFIRLEVGEGIEKKEEDFAAEVAAQIAASKKA.

The interval 79–82 is involved in Mg(2+) ion dislocation from EF-Tu; that stretch reads TDFV.

The protein belongs to the EF-Ts family.

The protein localises to the cytoplasm. Functionally, associates with the EF-Tu.GDP complex and induces the exchange of GDP to GTP. It remains bound to the aminoacyl-tRNA.EF-Tu.GTP complex up to the GTP hydrolysis stage on the ribosome. This Shewanella sp. (strain ANA-3) protein is Elongation factor Ts.